The sequence spans 191 residues: Calcium and integrin-binding protein 1 (191 aa).

Gly2 carries N-myristoyl glycine lipidation. EF-hand domains are found at residues 103–138 (TPDIKSHYAFRIFDFDDDGTLDREDLSRLVNCLTGE) and 148–183 (EMKQLIDNILEESDIDRDGTINLSEFQHVISRSPDF). Ca(2+) is bound by residues Asp116, Asp118, Asp120, Thr122, Asp127, Asp161, Asp163, Asp165, Thr167, and Glu172.

Monomer. Interacts with the heterodimeric integrin alpha-IIb/beta3 (ITGA2B-ITGB3). Interacts with ITGA2B (via cytoplasmic domain); the interaction is direct and calcium-dependent. Interacts with the protein kinases PLK2/SNK and PRKDC (via the region immediately upstream of the kinase domain). Interacts with PLK3; the interaction inhibits PLK3 kinase activity. Interacts with PSEN2. Interacts (via C-terminus) with F8. Interacts with NBR1 (via C-terminus). Interacts with FEZ1 (via C-terminus). Interacts with UBR5 (via C-terminus); the interaction is sensitive to DNA damage, and may target CIB1 for ubiquitin-mediated degradation. Interacts with IFI6; the interaction is direct. Interacts with BCL2. Interacts with ITPR3; the interaction occurs in a calcium dependent manner. Interacts with PTK2/FAK1. Interacts with MAP3K5; the interaction inhibits MAP3K5 activation by phosphorylation, and its subsequent interaction with TRAF2. Interacts (via C-terminal region) with STMN2 (via the N-terminal region); the interaction is direct, occurs in a calcium-dependent manner and attenuates the STMN2-induced neurite outgrowth inhibition. Interacts with SPHK1, the interaction occurs in a calcium-dependent manner. Interacts with ITGA2B (via C-terminal cytoplasmic tail); the interaction occurs upon platelet aggregation and is stabilized/increased in a calcium and magnesium-dependent manner. Interacts with PAK1 (via N-terminal region); the interaction is direct and occurs in a calcium-dependent manner. Interacts with RAC3 (via C-terminal region); the interaction induces their association with the cytoskeleton upon alpha-IIb/beta3 integrin-mediated adhesion. Interacts with ITGA5 and ITGAV. Interacts with MYO1C. Interacts with ITGA2B (via C-terminal cytoplasmic tail region). Interacts (via C-terminal region) with PPP3R1; the interaction increases upon cardiomyocytes hypertrophy. Interacts with CACNA1C; the interaction increases upon cardiomyocytes hypertrophy. Interacts with TAS1R2 (via C-terminus); this interaction is independent of the myristoylation state of CIB1. Interacts and forms a complex with TMC6 and TMC8; the interaction stabilizes each component of the complex. In terms of tissue distribution, expressed in cardiomyocytes and neurons (at protein level). Expressed during early neural development.

Its subcellular location is the membrane. It localises to the cell membrane. The protein resides in the sarcolemma. The protein localises to the apical cell membrane. It is found in the cell projection. Its subcellular location is the ruffle membrane. It localises to the filopodium tip. The protein resides in the growth cone. The protein localises to the lamellipodium. It is found in the cytoplasm. Its subcellular location is the cytoskeleton. It localises to the microtubule organizing center. The protein resides in the centrosome. The protein localises to the perinuclear region. It is found in the nucleus. Its subcellular location is the neuron projection. It localises to the perikaryon. In terms of biological role, calcium-binding protein that plays a role in the regulation of numerous cellular processes, such as cell differentiation, cell division, cell proliferation, cell migration, thrombosis, angiogenesis, cardiac hypertrophy and apoptosis. Involved in bone marrow megakaryocyte differentiation by negatively regulating thrombopoietin-mediated signaling pathway. Participates in the endomitotic cell cycle of megakaryocyte, a form of mitosis in which both karyokinesis and cytokinesis are interrupted. Plays a role in integrin signaling by negatively regulating alpha-IIb/beta3 activation in thrombin-stimulated megakaryocytes preventing platelet aggregation. Up-regulates PTK2/FAK1 activity, and is also needed for the recruitment of PTK2/FAK1 to focal adhesions; it thus appears to play an important role in focal adhesion formation. Positively regulates cell migration on fibronectin in a CDC42-dependent manner, the effect being negatively regulated by PAK1. Functions as a negative regulator of stress activated MAP kinase (MAPK) signaling pathways. Down-regulates inositol 1,4,5-trisphosphate receptor-dependent calcium signaling. Involved in sphingosine kinase SPHK1 translocation to the plasma membrane in a N-myristoylation-dependent manner preventing TNF-alpha-induced apoptosis. Regulates serine/threonine-protein kinase PLK3 activity for proper completion of cell division progression. Plays a role in microtubule (MT) dynamics during neuronal development; disrupts the MT depolymerization activity of STMN2 attenuating NGF-induced neurite outgrowth and the MT reorganization at the edge of lamellipodia. Promotes cardiomyocyte hypertrophy via activation of the calcineurin/NFAT signaling pathway. Stimulates calcineurin PPP3R1 activity by mediating its anchoring to the sarcolemma. In ischemia-induced (pathological or adaptive) angiogenesis, stimulates endothelial cell proliferation, migration and microvessel formation by activating the PAK1 and ERK1/ERK2 signaling pathway. Also promotes cancer cell survival and proliferation. May regulate cell cycle and differentiation of spermatogenic germ cells, and/or differentiation of supporting Sertoli cells. Forms a complex with TMC6/EVER1 and TMC8/EVER2 in lymphocytes and keratynocytes where CIB1 stabilizes TMC6 and TMC8 levels and reciprocally. The sequence is that of Calcium and integrin-binding protein 1 (Cib1) from Rattus norvegicus (Rat).